Here is a 135-residue protein sequence, read N- to C-terminus: Class I hydrophobin dewA (135 aa).

The signal sequence occupies residues 1-18 (MRFIVSLLAFTAAATATA). Intrachain disulfides connect cysteine 44–cysteine 114, cysteine 51–cysteine 108, cysteine 52–cysteine 84, and cysteine 115–cysteine 122. A glycan (N-linked (GlcNAc...) asparagine) is linked at asparagine 60.

The protein belongs to the fungal hydrophobin family. Forms homodimers at high concentrations, and these dimers are off-pathway to rodlet formation. Dissociation of the dimers into monomers, with resultant exposure of the hydrophobic face, is necessary for self-assembly to form functional amyloid fibrils called rodlets. Self-assembly into fibrillar rodlets occurs spontaneously at hydrophobic:hydrophilic interfaces and the rodlets further associate laterally to form amphipathic monolayers.

Its subcellular location is the secreted. It localises to the spore wall. Its function is as follows. Aerial growth, conidiation, and dispersal of filamentous fungi in the environment rely upon a capability of their secreting small amphipathic proteins called hydrophobins (HPBs) with low sequence identity. Class I can self-assemble into an outermost layer of rodlet bundles on aerial cell surfaces, conferring cellular hydrophobicity that supports fungal growth, development and dispersal; whereas Class II form highly ordered films at water-air interfaces through intermolecular interactions but contribute nothing to the rodlet structure. DewA is a class I hydrophobin that contributes to spore wall hydrophobicity. This Emericella nidulans (strain FGSC A4 / ATCC 38163 / CBS 112.46 / NRRL 194 / M139) (Aspergillus nidulans) protein is Class I hydrophobin dewA.